The sequence spans 254 residues: Triosephosphate isomerase (254 aa).

Asn-9–Lys-11 provides a ligand contact to substrate. His-96 acts as the Electrophile in catalysis. Catalysis depends on Glu-168, which acts as the Proton acceptor. Substrate contacts are provided by Gly-174 and Ser-213.

This sequence belongs to the triosephosphate isomerase family. Homodimer.

It is found in the cytoplasm. It carries out the reaction D-glyceraldehyde 3-phosphate = dihydroxyacetone phosphate. It participates in carbohydrate biosynthesis; gluconeogenesis. The protein operates within carbohydrate degradation; glycolysis; D-glyceraldehyde 3-phosphate from glycerone phosphate: step 1/1. Its function is as follows. Involved in the gluconeogenesis. Catalyzes stereospecifically the conversion of dihydroxyacetone phosphate (DHAP) to D-glyceraldehyde-3-phosphate (G3P). The chain is Triosephosphate isomerase from Buchnera aphidicola subsp. Schizaphis graminum (strain Sg).